The following is a 437-amino-acid chain: Protein farnesyltransferase subunit beta (437 aa).

PFTB repeat units follow at residues 123-164 (ATDV…CIIG), 174-215 (REKL…SLTN), 222-263 (FEGT…VILK), 270-312 (LKSL…PLLH), and 332-374 (QQAL…SIAQ). (2E,6E)-farnesyl diphosphate-binding positions include 248–251 (HGGY) and 291–294 (RCNK). Positions 297 and 299 each coordinate Zn(2+). (2E,6E)-farnesyl diphosphate is bound at residue 300–303 (YSFW). Position 362 (His-362) interacts with Zn(2+). Ser-432 is modified (phosphoserine). Thr-436 carries the post-translational modification Phosphothreonine.

This sequence belongs to the protein prenyltransferase subunit beta family. In terms of assembly, heterodimer of FNTA and FNTB. It depends on Zn(2+) as a cofactor.

The enzyme catalyses L-cysteinyl-[protein] + (2E,6E)-farnesyl diphosphate = S-(2E,6E)-farnesyl-L-cysteinyl-[protein] + diphosphate. Functionally, essential subunit of the farnesyltransferase complex. Catalyzes the transfer of a farnesyl moiety from farnesyl diphosphate to a cysteine at the fourth position from the C-terminus of several proteins having the C-terminal sequence Cys-aliphatic-aliphatic-X. The chain is Protein farnesyltransferase subunit beta (Fntb) from Mus musculus (Mouse).